A 135-amino-acid chain; its full sequence is MDKFWTFLTALHSGAGPIVMLLYPLYASVIAMESTTKVDDEQWLAYWIIYSFLSLTELILQSLIEWIPIWYTVKLVFVAWLVLPQFQGAAFIYNRVVREQFKKHGVLRSTHSKPTKPNILHSIFPHREGHEAHSH.

3 helical membrane-spanning segments follow: residues 11–31 (LHSGAGPIVMLLYPLYASVIA), 42–62 (QWLAYWIIYSFLSLTELILQS), and 63–83 (LIEWIPIWYTVKLVFVAWLVL).

The protein belongs to the DP1 family. Predominantly expressed in flower buds.

Its subcellular location is the membrane. The sequence is that of HVA22-like protein d (HVA22D) from Arabidopsis thaliana (Mouse-ear cress).